Consider the following 4599-residue polypeptide: Low-density lipoprotein receptor-related protein 1B (4599 aa).

Positions 1-20 (MSEFLLALLTLSGLLPIARV) are cleaved as a signal peptide. Over 25-4444 (ADRDQQLCDP…KSDHISTRSI (4420 aa)) the chain is Extracellular. 2 LDL-receptor class A domains span residues 31–70 (LCDPGEFLCHDHVTCVSQSWLCDGDPDCPDDSDESLDTCP) and 76–114 (KCPLNHIACLGTNKCVHLSQLCNGVLDCPDGYDEGVHCQ). 12 disulfide bridges follow: C32–C45, C39–C58, C52–C69, C77–C90, C84–C103, C97–C113, C120–C129, C125–C138, C140–C153, C159–C169, C165–C178, and C180–C193. Positions 116–154 (LLSNCQQLNCQYKCTMVRNSTRCYCEDGFEITEDGRSCK) constitute an EGF-like 1 domain. The N-linked (GlcNAc...) asparagine glycan is linked to N134. The region spanning 155–194 (DQDECAVYGTCSQTCRNTHGSYTCSCVEGYLMQPDNRSCK) is the EGF-like 2; calcium-binding domain. Residues N190, N220, N313, and N360 are each glycosylated (N-linked (GlcNAc...) asparagine). 3 LDL-receptor class B repeats span residues 295-337 (RNLY…DPIA), 338-381 (GKLF…DLVN), and 382-425 (KLVY…FEDY). N443 carries an N-linked (GlcNAc...) asparagine glycan. An EGF-like 3 domain is found at 471–517 (RSHACEVDPYGMPGGCSHICLLSSSYKTRTCRCRTGFNLGSDGRSCK). 4 LDL-receptor class B repeats span residues 568 to 610 (NYIY…DWIG), 611 to 656 (NNLY…DPVN), 657 to 706 (GWMY…DFHT), and 707 to 750 (NTLY…HGNY). N-linked (GlcNAc...) asparagine glycans are attached at residues N725 and N758. Residues 794–834 (GDNMCRVNNGGCSTLCLAIPGGRVCACADNQLLDENGTTCT) enclose the EGF-like 4 domain. 6 disulfides stabilise this stretch: C798–C809, C805–C818, C820–C833, C845–C857, C852–C870, and C864–C881. A glycan (N-linked (GlcNAc...) asparagine) is linked at N829. An LDL-receptor class A 3 domain is found at 844 to 882 (ICKAGEFRCKNRHCIQARWKCDGDDDCLDGSDEDSVNCF). A glycan (N-linked (GlcNAc...) asparagine) is linked at N883. LDL-receptor class A domains follow at residues 885–923 (SCPDDQFKCQNNRCIPKRWLCDGANDCGSNEDESNQTCT), 926–963 (TCQVDQFSCGNGRCIPRAWLCDREDDCGDQTDEMASCE), 966–1003 (TCEPLTQFVCKSGRCISSKWHCDSDDDCGDGSDEVGCV), 1005–1043 (SCFDNQFRCSSGRCIPGHWACDGDNDCGDFSDEAQINCT), 1052–1089 (GCNGNEFQCHPDGNCVPDLWRCDGEKDCEDGSDEKGCN), 1094–1132 (LCDHKTKFSCWSTGRCINKAWVCDGDIDCEDQSDEDDCD), and 1135–1174 (LCGPPKHPCANDTSVCLQPEKLCNGKKDCPDGSDEGYLCD). 15 disulfide bridges follow: C886-C898, C893-C911, C905-C922, C927-C939, C934-C952, C946-C962, C967-C980, C975-C993, C987-C1002, C1006-C1018, C1013-C1031, C1025-C1042, C1053-C1066, C1060-C1079, and C1073-C1088. N919 carries N-linked (GlcNAc...) asparagine glycosylation. An N-linked (GlcNAc...) asparagine glycan is attached at N1041. N-linked (GlcNAc...) asparagine glycosylation is present at N1089. 6 disulfide bridges follow: C1095/C1109, C1103/C1122, C1116/C1131, C1136/C1150, C1143/C1163, and C1157/C1173. Residue N1145 is glycosylated (N-linked (GlcNAc...) asparagine). 2 EGF-like domains span residues 1174–1213 (DECSLNNGGCSNHCSVVPGRGIVCSCPEGLQLNKDNKTCE) and 1214–1253 (IVDYCSNHLKCSQVCEQHKHTVKCSCYEGWKLDVDGESCT). A glycan (N-linked (GlcNAc...) asparagine) is linked at N1209. N-linked (GlcNAc...) asparagine glycosylation occurs at N1298. LDL-receptor class B repeat units lie at residues 1300 to 1346 (SLLY…DWIA), 1347 to 1389 (GNIY…DPRY), 1390 to 1436 (GILF…DHFE), 1437 to 1480 (KRIV…LYGS), and 1481 to 1522 (EVYW…YHPS). 3 N-linked (GlcNAc...) asparagine glycosylation sites follow: N1502, N1549, and N1636. The region spanning 1527-1570 (APNPCAANDGKGPCSHMCLINHNRSAACACPHLMKLSSDKKTCY) is the EGF-like 7 domain. 4 LDL-receptor class B repeats span residues 1618–1660 (ERLY…DWVS), 1661–1704 (RNLY…HPVR), 1705–1744 (GKLYWTDGNTINMANMDGSNSKILFQNQKEPVGLSIDYVE), and 1745–1787 (NKLY…TIMD). Residues N1754 and N1816 are each glycosylated (N-linked (GlcNAc...) asparagine). In terms of domain architecture, EGF-like 8 spans 1834–1875 (GSNSCQLNNGGCSQLCLPTSETTRTCMCTVGYYLQKNRMSCQ). 3 disulfide bridges follow: C1838-C1849, C1845-C1859, and C1861-C1874. N1921 carries N-linked (GlcNAc...) asparagine glycosylation. LDL-receptor class B repeat units lie at residues 1922–1964 (DTIY…DWIA), 1965–2007 (GNIY…HPEK), 2008–2051 (GLLF…DYEE), and 2052–2095 (NKLY…FGAY). An N-linked (GlcNAc...) asparagine glycan is attached at N1983. N-linked (GlcNAc...) asparagine glycosylation occurs at N2105. The EGF-like 9 domain occupies 2143–2183 (GTNVCARDNGGCKQLCLYRGNSRRTCACAHGYLAEDGVTCL). 3 disulfide bridges follow: C2147–C2158, C2154–C2168, and C2170–C2182. LDL-receptor class B repeat units follow at residues 2239 to 2280 (NRIF…HRAW), 2281 to 2329 (DTLY…DECQ), 2330 to 2374 (NLMF…DYRA), 2375 to 2416 (EKLY…VYDN), and 2417 to 2459 (YIFW…VAND). 3 N-linked (GlcNAc...) asparagine glycosylation sites follow: N2458, N2488, and N2507. Residues 2464–2504 (ELSPCALLNGGCHDLCLLTPNGRVNCSCRGDRILLEDNRCV) enclose the EGF-like 10 domain. An LDL-receptor class A 11 domain is found at 2509–2548 (SCNAYSEFECGNGECIDYQLTCDGIPHCKDKSDEKLLYCE). 3 disulfides stabilise this stretch: C2510-C2523, C2518-C2536, and C2530-C2547. N-linked (GlcNAc...) asparagine glycosylation is present at N2549. LDL-receptor class A domains are found at residues 2551–2587 (SCRRGFKPCYNRRCIPHGKLCDGENDCGDNSDELDCK), 2590–2626 (TCATVEFRCADGTCIPRSARCNQNIDCADASDEKNCN), 2629–2675 (DCTH…LKCP), 2681–2717 (KCEENYFSCPSGRCILNTWICDGQKDCEDGRDEFHCD), 2719–2757 (SCSWNQFACSAQKCISKHWICDGEDDCGDGLDESDSICG), and 2760–2800 (TCAA…AGCA). 6 cysteine pairs are disulfide-bonded: C2552/C2564, C2559/C2577, C2571/C2586, C2591/C2603, C2598/C2616, and C2610/C2625. N-linked (GlcNAc...) asparagine glycans are attached at residues N2626 and N2647. 12 disulfide bridges follow: C2630–C2652, C2646–C2665, C2659–C2674, C2682–C2694, C2689–C2707, C2701–C2716, C2720–C2732, C2727–C2745, C2739–C2756, C2761–C2774, C2768–C2787, and C2781–C2799. The N-linked (GlcNAc...) asparagine glycan is linked to N2802. LDL-receptor class A domains lie at 2804-2841 (TCDENAFMCHNKVCIPKQFVCDHDDDCGDGSDESPQCG), 2844-2885 (QCGT…PKCK), and 2890-2926 (SCNSSFFMCKNGRCIPSGGLCDNKDDCGDGSDERNCH). Intrachain disulfides connect C2805/C2817, C2812/C2830, C2824/C2840, C2845/C2857, C2852/C2871, C2865/C2884, C2891/C2903, C2898/C2916, C2910/C2925, C2930/C2942, C2938/C2951, C2953/C2966, C2972/C2982, C2978/C2991, and C2993/C3007. Residue N2892 is glycosylated (N-linked (GlcNAc...) asparagine). Positions 2927 to 2967 (INECLSKKVSGCSQDCQDLPVSYKCKCWPGFQLKDDGKTCV) constitute an EGF-like 11 domain. The 41-residue stretch at 2968 to 3008 (DIDECSSGFPCSQQCINTYGTYKCLCTDGYEIQPDNPNGCK) folds into the EGF-like 12; calcium-binding domain. N-linked (GlcNAc...) asparagine glycosylation is found at N3034, N3066, and N3076. 5 LDL-receptor class B repeats span residues 3055–3098 (EFIY…DWIG), 3099–3141 (KNLY…DPQA), 3142–3185 (GYLY…DYVN), 3186–3224 (RRLYWADENHIEFSNMDGSHRHKVPNQDIPGVIALTLFE), and 3225–3268 (DYIY…HSYR). A glycan (N-linked (GlcNAc...) asparagine) is linked at N3164. Positions 3273 to 3314 (SKHLCMINNGGCSHLCLLAPGKTHTCACPTNFYLAADNRTCL) constitute an EGF-like 13 domain. N3310 and N3316 each carry an N-linked (GlcNAc...) asparagine glycan. LDL-receptor class A domains lie at 3316–3353 (NCTASQFRCKTDKCIPFWWKCDTVDDCGDGSDEPDDCP), 3356–3392 (RCQPGRFQCGTGLCALPAFICDGENDCGDNSDELNCD), 3395–3432 (VCLSGQFKCTKNQKCIPVNLRCNGQDDCGDEEDERDCP), 3435–3472 (SCSPDYFQCKTTKHCISKLWVCDEDPDCADASDEANCD), 3475–3511 (TCGPHEFQCKNNNCIPDHWRCDSQNDCSDNSDEENCK), 3514–3550 (TCTLKDFLCANGDCVSSRFWCDGDFDCADGSDERNCE), 3552–3588 (SCSKDQFRCSNGQCIPAKWKCDGHEDCKYGEDEKSCE), 3593–3629 (TCSSREYICASDGCISASLKCNGEYDCADGSDEMDCV), 3631–3668 (ECKEDQFRCKNKAHCIPIRWLCDGIHDCVDGSDEENCE), 3673–3711 (ICRADEFLCNNSLCKLHFWVCDGEDDCGDNSDEAPDMCV), 3714–3752 (LCPSTRPHRCRNNRICLQSEQMCNGIDECGDNSDEDHCG), and 3761–3797 (PCKKDEFACSNKKCIPMDLQCDRLDDCGDGSDEQGCR). 42 disulfide bridges follow: C3317–C3329, C3324–C3342, C3336–C3352, C3357–C3369, C3364–C3382, C3376–C3391, C3396–C3409, C3403–C3422, C3416–C3431, C3436–C3449, C3443–C3462, C3456–C3471, C3476–C3488, C3483–C3501, C3495–C3510, C3515–C3527, C3522–C3540, C3534–C3549, C3553–C3565, C3560–C3578, C3572–C3587, C3594–C3606, C3601–C3619, C3613–C3628, C3632–C3645, C3639–C3658, C3652–C3667, C3674–C3686, C3681–C3699, C3693–C3710, C3715–C3729, C3723–C3742, C3736–C3751, C3762–C3774, C3769–C3787, C3781–C3796, C3805–C3818, C3812–C3827, C3829–C3842, C3848–C3858, C3854–C3867, and C3869–C3880. Residue N3682 is glycosylated (N-linked (GlcNAc...) asparagine). EGF-like domains are found at residues 3801–3843 (TEYT…RQCE) and 3844–3881 (DLNECLVFGTCSHQCINVEGSYKCVCDQNFQERNNTCI). Residues N3877, N3894, and N3906 are each glycosylated (N-linked (GlcNAc...) asparagine). LDL-receptor class B repeat units lie at residues 3933–3980 (DMII…DWVA), 3981–4038 (GNIY…NPKR), 4039–4082 (GMMY…DYFS), and 4083–4127 (ERIY…FEDY). An N-linked (GlcNAc...) asparagine glycan is attached at N4017. 7 consecutive EGF-like domains span residues 4171-4208 (DLPNPCLDLACEFLCLLNPSGATCVCPEGKYLINGTCN), 4213-4249 (LDDSCKLTCENGGRCILNEKGDLRCHCWPSYSGERCE), 4249-4285 (EVNHCSNYCQNGGTCVPSVLGRPTCSCALGFTGPNCG), 4285-4321 (GKTVCEDFCQNGGTCIVTAGNQPYCHCQPEYTGDRCQ), 4321-4357 (QYYVCHHYCVNSESCTIGDDGSVECVCPTRYEGPKCE), 4357-4392 (EVDKCVRCHGGHCIINKDSEDIFCNCTNGKIASSCQ), and 4390-4427 (SCQLCDGYCYNGGTCQLDPETNVPVCLCSTNWSGTQCE). The N-linked (GlcNAc...) asparagine glycan is linked to N4204. Intrachain disulfides connect C4217/C4227, C4221/C4237, C4253/C4263, C4257/C4273, C4275/C4284, C4289/C4299, C4293/C4309, C4311/C4320, C4325/C4335, C4329/C4345, and C4347/C4356. Residue N4381 is glycosylated (N-linked (GlcNAc...) asparagine). Intrachain disulfides connect C4394–C4404, C4398–C4415, and C4417–C4426. Residue N4420 is glycosylated (N-linked (GlcNAc...) asparagine). The chain crosses the membrane as a helical span at residues 4445–4467 (AIIVPLVLLVTLITTLVIGLVLC). Over 4468–4599 (KRKRRTKTIR…IEIGIRETVA (132 aa)) the chain is Cytoplasmic. 2 consecutive short sequence motifs (endocytosis signal) follow at residues 4492-4495 (NPSY) and 4559-4562 (NPVY).

The protein belongs to the LDLR family. In terms of assembly, binds LRPAP1, PLAU, PLAT and SERPINE1; binding is followed by internalization and degradation of the ligands. In terms of tissue distribution, expressed in thyroid gland and in salivary gland, as well as in adult and fetal brain.

It localises to the membrane. In terms of biological role, potential cell surface proteins that bind and internalize ligands in the process of receptor-mediated endocytosis. The polypeptide is Low-density lipoprotein receptor-related protein 1B (LRP1B) (Homo sapiens (Human)).